The following is a 79-amino-acid chain: Acyl carrier protein (79 aa).

The Carrier domain occupies 3–78; that stretch reads QEILEKVCSI…DAVKFIEEKK (76 aa). Serine 38 is modified (O-(pantetheine 4'-phosphoryl)serine).

It belongs to the acyl carrier protein (ACP) family. Post-translationally, 4'-phosphopantetheine is transferred from CoA to a specific serine of apo-ACP by AcpS. This modification is essential for activity because fatty acids are bound in thioester linkage to the sulfhydryl of the prosthetic group.

The protein localises to the cytoplasm. It participates in lipid metabolism; fatty acid biosynthesis. Functionally, carrier of the growing fatty acid chain in fatty acid biosynthesis. This Prochlorococcus marinus (strain MIT 9301) protein is Acyl carrier protein.